Reading from the N-terminus, the 481-residue chain is Zinc metalloproteinase/disintegrin (481 aa).

The first 20 residues, 1–20, serve as a signal peptide directing secretion; sequence MIQVLLVTICLAVFPYQGSS. Positions 21–190 are excised as a propeptide; it reads IILESGNVDD…KASQLYLTPE (170 aa). Residues 197 to 392 enclose the Peptidase M12B domain; the sequence is RYIKLAIVVD…DNPQCILNAP (196 aa). Disulfide bonds link Cys-308–Cys-387, Cys-349–Cys-371, and Cys-351–Cys-354. Residue His-333 coordinates Zn(2+). Glu-334 is a catalytic residue. 2 residues coordinate Zn(2+): His-337 and His-343. Positions 393–408 are excised as a propeptide; that stretch reads LRTDTVSTPVSGNEFL. The 82-residue stretch at 400–481 folds into the Disintegrin domain; it reads TPVSGNEFLE…ADCPRNGLYS (82 aa). 6 disulfides stabilise this stretch: Cys-414/Cys-429, Cys-416/Cys-424, Cys-423/Cys-446, Cys-437/Cys-443, Cys-442/Cys-467, and Cys-455/Cys-474. Positions 459 to 461 match the Cell attachment site motif; sequence RGD.

The protein belongs to the venom metalloproteinase (M12B) family. P-II subfamily. P-IIa sub-subfamily. Monomer. Zn(2+) is required as a cofactor. Expressed by the venom gland.

Its subcellular location is the secreted. Its function is as follows. Impairs hemostasis in the envenomed animal. Inhibits platelet aggregation induced by ADP, thrombin, platelet-activating factor and collagen. Acts by inhibiting fibrinogen interaction with platelet receptors GPIIb/GPIIIa (ITGA2B/ITGB3). This chain is Zinc metalloproteinase/disintegrin, found in Protobothrops elegans (Elegant pitviper).